A 188-amino-acid polypeptide reads, in one-letter code: GMP synthase [glutamine-hydrolyzing] subunit A (188 aa).

Residues M1–L188 enclose the Glutamine amidotransferase type-1 domain. Catalysis depends on C78, which acts as the Nucleophile. Residues H165 and E167 contribute to the active site.

In terms of assembly, heterodimer composed of a glutamine amidotransferase subunit (A) and a GMP-binding subunit (B).

It catalyses the reaction XMP + L-glutamine + ATP + H2O = GMP + L-glutamate + AMP + diphosphate + 2 H(+). It participates in purine metabolism; GMP biosynthesis; GMP from XMP (L-Gln route): step 1/1. In terms of biological role, catalyzes the synthesis of GMP from XMP. The chain is GMP synthase [glutamine-hydrolyzing] subunit A from Pyrococcus abyssi (strain GE5 / Orsay).